The sequence spans 89 residues: MGISPERKKEIIESFKMHSSDTGSPEVQIALMTERINYLTEHFKTHKKDHHSRRGLIKLVAQRRKLLNYLKKIDKERYGKLIERLSIRK.

Belongs to the universal ribosomal protein uS15 family. In terms of assembly, part of the 30S ribosomal subunit. Forms a bridge to the 50S subunit in the 70S ribosome, contacting the 23S rRNA.

Its function is as follows. One of the primary rRNA binding proteins, it binds directly to 16S rRNA where it helps nucleate assembly of the platform of the 30S subunit by binding and bridging several RNA helices of the 16S rRNA. Functionally, forms an intersubunit bridge (bridge B4) with the 23S rRNA of the 50S subunit in the ribosome. The chain is Small ribosomal subunit protein uS15 from Thermodesulfovibrio yellowstonii (strain ATCC 51303 / DSM 11347 / YP87).